A 267-amino-acid chain; its full sequence is Hydroxyacylglutathione hydrolase (267 aa).

Zn(2+) contacts are provided by histidine 55, histidine 57, aspartate 59, histidine 60, histidine 121, aspartate 138, and histidine 176.

The protein belongs to the metallo-beta-lactamase superfamily. Glyoxalase II family. In terms of assembly, monomer. It depends on Zn(2+) as a cofactor.

It catalyses the reaction an S-(2-hydroxyacyl)glutathione + H2O = a 2-hydroxy carboxylate + glutathione + H(+). Its pathway is secondary metabolite metabolism; methylglyoxal degradation; (R)-lactate from methylglyoxal: step 2/2. Functionally, thiolesterase that catalyzes the hydrolysis of S-D-lactoyl-glutathione to form glutathione and D-lactic acid. The polypeptide is Hydroxyacylglutathione hydrolase (Shewanella oneidensis (strain ATCC 700550 / JCM 31522 / CIP 106686 / LMG 19005 / NCIMB 14063 / MR-1)).